Here is a 304-residue protein sequence, read N- to C-terminus: Glutamyl-Q tRNA(Asp) synthetase (304 aa).

L-glutamate is bound by residues 14 to 18 and Glu50; that span reads RFAPS. Residues 17–27 carry the 'HIGH' region motif; that stretch reads PSPSGPLHFGS. Cys106, Cys108, Tyr120, and Cys124 together coordinate Zn(2+). The L-glutamate site is built by Tyr178 and Arg196. Residues 234-238 carry the 'KMSKS' region motif; the sequence is KLSKQ. An ATP-binding site is contributed by Lys237.

The protein belongs to the class-I aminoacyl-tRNA synthetase family. GluQ subfamily. It depends on Zn(2+) as a cofactor.

Its function is as follows. Catalyzes the tRNA-independent activation of glutamate in presence of ATP and the subsequent transfer of glutamate onto a tRNA(Asp). Glutamate is transferred on the 2-amino-5-(4,5-dihydroxy-2-cyclopenten-1-yl) moiety of the queuosine in the wobble position of the QUC anticodon. The sequence is that of Glutamyl-Q tRNA(Asp) synthetase from Vibrio cholerae serotype O1 (strain ATCC 39315 / El Tor Inaba N16961).